The sequence spans 514 residues: Putative binding protein HI_0213 (514 aa).

The N-terminal stretch at 1-23 is a signal peptide; it reads MNNLFALCQRSAVIFSIIFTVVA. Residue Cys24 is the site of N-palmitoyl cysteine attachment. Cys24 carries the S-diacylglycerol cysteine lipid modification.

It belongs to the bacterial solute-binding protein 5 family.

The protein localises to the cell membrane. Functionally, part of a binding-protein-dependent transport system. The sequence is that of Putative binding protein HI_0213 from Haemophilus influenzae (strain ATCC 51907 / DSM 11121 / KW20 / Rd).